The primary structure comprises 436 residues: MTDIFEVPTPDNELLEKAKQLRLASIKTSQTNNDDRIRALNLMADYLEKNSKEIIEANIEDYKKAEIKGISKSLLSRLKLSKEKLNLGIEGVRQVGNLIDPVGQIQIKRELSKGLILERKTVPIGVLGVIFESRPDAVMQISSLAIRSGNGVMLKGGSEANLTNLAIVSALKEGLQDSNLDENAICLLTSRKDSMAMLNLEKYINLIIPRGSNELVKFIQENTEIPVLGHADGICHLYIDNEVNLDMALKVALDSKIQYPAACNAVETLLIHKDTASEFLNKAIPMFNSNDVKLIGDKKSFQLGVAFEANYEDWQTEYLDLILSIKIVNDLEEAIAHIQKFSSKHTDGIITENINNANKFMSEIDSSGVFHNCSTRFADGFRYGFGAEVGISTQTLPPRGPVGLEGLVTYKYFLRGEGHIVDDFSSGKLIYSHKDV.

The protein belongs to the gamma-glutamyl phosphate reductase family.

The protein localises to the cytoplasm. It catalyses the reaction L-glutamate 5-semialdehyde + phosphate + NADP(+) = L-glutamyl 5-phosphate + NADPH + H(+). The protein operates within amino-acid biosynthesis; L-proline biosynthesis; L-glutamate 5-semialdehyde from L-glutamate: step 2/2. Catalyzes the NADPH-dependent reduction of L-glutamate 5-phosphate into L-glutamate 5-semialdehyde and phosphate. The product spontaneously undergoes cyclization to form 1-pyrroline-5-carboxylate. This chain is Gamma-glutamyl phosphate reductase, found in Prochlorococcus marinus subsp. pastoris (strain CCMP1986 / NIES-2087 / MED4).